The sequence spans 100 residues: Small ribosomal subunit protein uS14 (100 aa).

Zn(2+)-binding residues include Cys-63, Cys-66, Cys-79, and Cys-82.

The protein belongs to the universal ribosomal protein uS14 family. In terms of assembly, part of the 30S ribosomal subunit. Contacts proteins S3 and S10. Zn(2+) serves as cofactor.

Functionally, binds 16S rRNA, required for the assembly of 30S particles and may also be responsible for determining the conformation of the 16S rRNA at the A site. The chain is Small ribosomal subunit protein uS14 (rpsN) from Legionella pneumophila (strain Paris).